The primary structure comprises 224 residues: uncharacterized protein (224 aa).

Residues 108–137 are a coiled coil; that stretch reads QLALDRAELNESIRATNENLALQYSKLQTE.

This is an uncharacterized protein from Human picobirnavirus (strain Human/Thailand/Hy005102/-) (PBV).